Reading from the N-terminus, the 325-residue chain is DNA-directed RNA polymerase subunit alpha (325 aa).

An alpha N-terminal domain (alpha-NTD) region spans residues 1 to 231; sequence MQTSLLKPKI…DQLSVFAALE (231 aa). The interval 246 to 325 is alpha C-terminal domain (alpha-CTD); sequence IDPILLRPVD…ENWPPAGLDK (80 aa).

It belongs to the RNA polymerase alpha chain family. Homodimer. The RNAP catalytic core consists of 2 alpha, 1 beta, 1 beta' and 1 omega subunit. When a sigma factor is associated with the core the holoenzyme is formed, which can initiate transcription.

It carries out the reaction RNA(n) + a ribonucleoside 5'-triphosphate = RNA(n+1) + diphosphate. In terms of biological role, DNA-dependent RNA polymerase catalyzes the transcription of DNA into RNA using the four ribonucleoside triphosphates as substrates. The sequence is that of DNA-directed RNA polymerase subunit alpha from Burkholderia orbicola (strain MC0-3).